A 231-amino-acid polypeptide reads, in one-letter code: Class A basic helix-loop-helix protein 9 (231 aa).

The 53-residue stretch at 61–113 (ARRMAANVRERKRILDYNEAFNALRRALQHDLGGKRLSKIATLRRAIHRITAL) folds into the bHLH domain. Residues 135-168 (QAAQGSSTGNSSFSVPRSAPSPIAPSLTRRDIAS) are disordered. Polar residues predominate over residues 137–149 (AQGSSTGNSSFSV).

As to quaternary structure, heterodimer. Efficient DNA binding requires dimerization with another bHLH protein. Interacts with TCF3, TCF4, and TCF12.

The protein resides in the nucleus. Functionally, transcription factor, which play a role in limb development. Is an essential player in the regulatory network governing transcription of genes implicated in limb morphogenesis. The chain is Class A basic helix-loop-helix protein 9 (Bhlha9) from Mus musculus (Mouse).